A 430-amino-acid chain; its full sequence is tRNA(Ile)-lysidine synthase (430 aa).

Residue 24 to 29 (SGGLDS) participates in ATP binding.

This sequence belongs to the tRNA(Ile)-lysidine synthase family.

The protein localises to the cytoplasm. It catalyses the reaction cytidine(34) in tRNA(Ile2) + L-lysine + ATP = lysidine(34) in tRNA(Ile2) + AMP + diphosphate + H(+). In terms of biological role, ligates lysine onto the cytidine present at position 34 of the AUA codon-specific tRNA(Ile) that contains the anticodon CAU, in an ATP-dependent manner. Cytidine is converted to lysidine, thus changing the amino acid specificity of the tRNA from methionine to isoleucine. This is tRNA(Ile)-lysidine synthase from Haemophilus influenzae (strain 86-028NP).